The following is a 327-amino-acid chain: Glycoprotein integral membrane protein 1 (327 aa).

The N-terminal stretch at 1–23 is a signal peptide; it reads MEGGLSAPLSVRLLLFIALPAAG. The Extracellular portion of the chain corresponds to 24–259; the sequence is WLTTNAPRPP…LCRFWSSVVP (236 aa). N-linked (GlcNAc...) asparagine glycosylation is found at Asn44, Asn62, and Asn146. The chain crosses the membrane as a helical span at residues 260-280; that stretch reads VLFMFLDVMVVGVLGAAGVIA. The Cytoplasmic portion of the chain corresponds to 281–327; it reads VLKLLFPVCENKGILQVDKMNGISVPIILYPDGSEKTAQKLTDKTDI.

It is found in the membrane. This is Glycoprotein integral membrane protein 1 (Ginm1) from Mus musculus (Mouse).